The sequence spans 515 residues: Maturase K (515 aa).

It belongs to the intron maturase 2 family. MatK subfamily.

It is found in the plastid. The protein resides in the chloroplast. Functionally, usually encoded in the trnK tRNA gene intron. Probably assists in splicing its own and other chloroplast group II introns. This chain is Maturase K, found in Pinus uncinata (Mountain pine).